We begin with the raw amino-acid sequence, 1238 residues long: MSGTPRRPASGADSFHKPEPEIVGPGTPGFPEQEEDDLHRTLGVERFEEILQEAGSRGGEELGRSYGEEDFEYHRQSSHHIHHPLSTHLPPDARRRKTPQGQVRKPRRRPGATPAGETPTIEEGEEDEDETSEAEGPVSHTDPSPASTPTSVQFFLQEDEGTDRKAERTSPSPPAQLPHQEAAPQATKKAQPDALVEEAIMVSGGTAGGDDGGASGRPLSKAQPGHRSYNLQERRRIGSMTGVEQALLPRVPTDESEAQTLATADLDLMKSHRFEDVPGVRRHLVRKNAKGSSQSSREGREPGPTPRTRPRAPHKPHEVFVELNELLLDKNQEPQWRETARWIKFEEDVEEETERWGKPHVASLSFRSLLELRRTLAHGAVLLDLDQQTLPGVAHQVVEQMVISDQIKAEDRANVLRALLLKHSHPSDEKEFSFPRNISAGSLGSLLGHHHTQGAESDPHVTEPLIGGVPETRLEVERERELPPPAPPAGITRSKSKHELKLLEKIPENAEATVVLVGCVEFLSRPTMAFVRLREAVELDAVLEVPVPVRFLFLLLGPSSANMDYHEIGRSISTLMSDKQFHEAAYLADEREDLLTAINAFLDCSVVLPPSEVQGEELLRSVAHFQRQMLKKREEQGRLLPPGVGLEPKSAQEKAFLQMVEAVGAVEDDDPLRRTGRPFGGLIRDVKRRYPHYLSDFRDALDPQCLAAVIFIYFAALSPAITFGGLLGEKTHDLIGVSELIMSTALQGVTFCLLGAQPLLVIGFSGPLLVFEEAFYSFCRSNELEYLVGRVWIGFWLVLSALLMVALEGSFLVRFGSRFTQEIFAFLISLIFIYETFYKLVKIFQEHPLHGCLASNSSEADGGKNTTWTEAAPTPGHGNTSSAEQAGVERPQGQPNTALLSLVLMAGTFFIAFFLRKFKNSRFFPGRIRRVIGDFGVPIAILIMVLVDYSIQDTYTQKLSVPSGFSVTAPEKRGWIINPLGEEEPFPVWMMVASLLPAILVFILIFMETQITTLIISKKERMLQKGSGFHLDLLLIVAMGGICALFGLLWLAAATVRSVTHANALTVMSKAVAPGDKPKIQEVKEQRVTGLLVALLVGLSLVIGDLLRQIPLAVLFGIFLYMGVTSLNGIQFYERLHLLLMPPKHHPDVMYVKKVRTMRMHLFKALQLLCLALLWAVMSTAASLAFPFILILTVPLRMVVLTRIFTEREMKCLDANEAEPVFDEREGVDEYNEMPMPV.

The interval 1-238 is disordered; sequence MSGTPRRPAS…YNLQERRRIG (238 aa). Residues 1-704 lie on the Cytoplasmic side of the membrane; that stretch reads MSGTPRRPAS…SDFRDALDPQ (704 aa). Basic and acidic residues-rich tracts occupy residues 37-49 and 58-75; these read DLHRTLGVERFEE and GGEELGRSYGEEDFEYHR. Basic residues-rich tracts occupy residues 76–85 and 94–110; these read QSSHHIHHPL and RRRKTPQGQVRKPRRRP. The span at 120–133 shows a compositional bias: acidic residues; sequence TIEEGEEDEDETSE. Ser-132, Ser-144, Ser-170, and Ser-172 each carry phosphoserine. Over residues 141-154 the composition is skewed to polar residues; the sequence is TDPSPASTPTSVQF. Gly residues predominate over residues 205–215; the sequence is GTAGGDDGGAS. The residue at position 239 (Ser-239) is a Phosphoserine. At Thr-253 the chain carries Phosphothreonine. Lys-270 is subject to N6-methyllysine. A disordered region spans residues 277–315; sequence VPGVRRHLVRKNAKGSSQSSREGREPGPTPRTRPRAPHK. A compositionally biased stretch (basic residues) spans 280–289; it reads VRRHLVRKNA. Phosphoserine is present on Ser-439. A disordered region spans residues 445–466; that stretch reads SLLGHHHTQGAESDPHVTEPLI. 4 consecutive transmembrane segments (helical) span residues 705 to 728, 734 to 771, 791 to 813, and 823 to 844; these read CLAAVIFIYFAALSPAITFGGLLG, LIGVSELIMSTALQGVTFCLLGAQPLLVIGFSGPLLVF, VWIGFWLVLSALLMVALEGSFLV, and IFAFLISLIFIYETFYKLVKIF. The interval 705–1238 is membrane (anion exchange); the sequence is CLAAVIFIYF…DEYNEMPMPV (534 aa). The Extracellular segment spans residues 845 to 897; it reads QEHPLHGCLASNSSEADGGKNTTWTEAAPTPGHGNTSSAEQAGVERPQGQPNT. Asn-856, Asn-865, and Asn-879 each carry an N-linked (GlcNAc...) asparagine glycan. The span at 858 to 869 shows a compositional bias: polar residues; it reads SEADGGKNTTWT. A disordered region spans residues 858–892; that stretch reads SEADGGKNTTWTEAAPTPGHGNTSSAEQAGVERPQ. A helical transmembrane segment spans residues 898–915; sequence ALLSLVLMAGTFFIAFFL. The Cytoplasmic segment spans residues 916–930; that stretch reads RKFKNSRFFPGRIRR. The next 5 membrane-spanning stretches (helical) occupy residues 931 to 951, 985 to 1007, 1033 to 1054, 1088 to 1133, and 1160 to 1196; these read VIGDFGVPIAILIMVLVDYSI, PFPVWMMVASLLPAILVFILIFM, LLLIVAMGGICALFGLLWLAAA, VTGL…IQFY, and MHLFKALQLLCLALLWAVMSTAASLAFPFILILTVPL. Cys-1170 is lipidated: S-palmitoyl cysteine.

It belongs to the anion exchanger (TC 2.A.31) family. Expressed in the cochlea (at protein level).

The protein resides in the apical cell membrane. Its subcellular location is the basolateral cell membrane. It carries out the reaction hydrogencarbonate(in) + chloride(out) = hydrogencarbonate(out) + chloride(in). Its function is as follows. Sodium-independent anion exchanger which mediates the electroneutral exchange of chloride for bicarbonate ions across the cell membrane. Plays an important role in osteoclast differentiation and function. Regulates bone resorption and calpain-dependent actin cytoskeleton organization in osteoclasts via anion exchange-dependent control of pH. Essential for intracellular pH regulation in CD8(+) T-cells upon CD3 stimulation, modulating CD8(+) T-cell response. This Cavia porcellus (Guinea pig) protein is Anion exchange protein 2 (SLC4A2).